Here is a 188-residue protein sequence, read N- to C-terminus: ATP synthase subunit delta (188 aa).

The protein belongs to the ATPase delta chain family. In terms of assembly, F-type ATPases have 2 components, F(1) - the catalytic core - and F(0) - the membrane proton channel. F(1) has five subunits: alpha(3), beta(3), gamma(1), delta(1), epsilon(1). F(0) has three main subunits: a(1), b(2) and c(10-14). The alpha and beta chains form an alternating ring which encloses part of the gamma chain. F(1) is attached to F(0) by a central stalk formed by the gamma and epsilon chains, while a peripheral stalk is formed by the delta and b chains.

It localises to the cell inner membrane. Functionally, f(1)F(0) ATP synthase produces ATP from ADP in the presence of a proton or sodium gradient. F-type ATPases consist of two structural domains, F(1) containing the extramembraneous catalytic core and F(0) containing the membrane proton channel, linked together by a central stalk and a peripheral stalk. During catalysis, ATP synthesis in the catalytic domain of F(1) is coupled via a rotary mechanism of the central stalk subunits to proton translocation. In terms of biological role, this protein is part of the stalk that links CF(0) to CF(1). It either transmits conformational changes from CF(0) to CF(1) or is implicated in proton conduction. The sequence is that of ATP synthase subunit delta from Rhizobium etli (strain ATCC 51251 / DSM 11541 / JCM 21823 / NBRC 15573 / CFN 42).